The following is a 98-amino-acid chain: NADH-ubiquinone oxidoreductase chain 4L (98 aa).

3 helical membrane-spanning segments follow: residues methionine 1 to methionine 21, serine 29 to leucine 49, and isoleucine 61 to valine 81.

This sequence belongs to the complex I subunit 4L family. Core subunit of respiratory chain NADH dehydrogenase (Complex I) which is composed of 45 different subunits.

The protein resides in the mitochondrion inner membrane. It catalyses the reaction a ubiquinone + NADH + 5 H(+)(in) = a ubiquinol + NAD(+) + 4 H(+)(out). In terms of biological role, core subunit of the mitochondrial membrane respiratory chain NADH dehydrogenase (Complex I) which catalyzes electron transfer from NADH through the respiratory chain, using ubiquinone as an electron acceptor. Part of the enzyme membrane arm which is embedded in the lipid bilayer and involved in proton translocation. The polypeptide is NADH-ubiquinone oxidoreductase chain 4L (MT-ND4L) (Leptonychotes weddellii (Weddell seal)).